The sequence spans 105 residues: Heat shock protein HspQ (105 aa).

It belongs to the HspQ family.

Its subcellular location is the cytoplasm. Its function is as follows. Involved in the degradation of certain denaturated proteins, including DnaA, during heat shock stress. The protein is Heat shock protein HspQ of Blochmanniella floridana.